We begin with the raw amino-acid sequence, 162 residues long: NADH-quinone oxidoreductase subunit I (162 aa).

4Fe-4S ferredoxin-type domains are found at residues 54–83 (RRYENGEERCIACKLCEAVCPALAITIESE) and 93–122 (TRYDIDLTKCIFCGFCEESCPVDSIVETQI). Residues cysteine 63, cysteine 66, cysteine 69, cysteine 73, cysteine 102, cysteine 105, cysteine 108, and cysteine 112 each contribute to the [4Fe-4S] cluster site.

Belongs to the complex I 23 kDa subunit family. NDH-1 is composed of 14 different subunits. Subunits NuoA, H, J, K, L, M, N constitute the membrane sector of the complex. It depends on [4Fe-4S] cluster as a cofactor.

The protein localises to the cell inner membrane. The catalysed reaction is a quinone + NADH + 5 H(+)(in) = a quinol + NAD(+) + 4 H(+)(out). In terms of biological role, NDH-1 shuttles electrons from NADH, via FMN and iron-sulfur (Fe-S) centers, to quinones in the respiratory chain. The immediate electron acceptor for the enzyme in this species is believed to be ubiquinone. Couples the redox reaction to proton translocation (for every two electrons transferred, four hydrogen ions are translocated across the cytoplasmic membrane), and thus conserves the redox energy in a proton gradient. The chain is NADH-quinone oxidoreductase subunit I from Burkholderia mallei (strain NCTC 10247).